A 611-amino-acid chain; its full sequence is Threonine--tRNA ligase (611 aa).

The tract at residues 211–509 (DHRKLGTELE…LTEHYAGEFP (299 aa)) is catalytic. The Zn(2+) site is built by Cys310, His361, and His486.

Belongs to the class-II aminoacyl-tRNA synthetase family. As to quaternary structure, homodimer. The cofactor is Zn(2+).

It localises to the cytoplasm. It carries out the reaction tRNA(Thr) + L-threonine + ATP = L-threonyl-tRNA(Thr) + AMP + diphosphate + H(+). In terms of biological role, catalyzes the attachment of threonine to tRNA(Thr) in a two-step reaction: L-threonine is first activated by ATP to form Thr-AMP and then transferred to the acceptor end of tRNA(Thr). Also edits incorrectly charged L-seryl-tRNA(Thr). This Nautilia profundicola (strain ATCC BAA-1463 / DSM 18972 / AmH) protein is Threonine--tRNA ligase.